The following is a 752-amino-acid chain: Maltodextrin phosphorylase (752 aa).

An N6-(pyridoxal phosphate)lysine modification is found at Lys603.

This sequence belongs to the glycogen phosphorylase family. Requires pyridoxal 5'-phosphate as cofactor.

It catalyses the reaction [(1-&gt;4)-alpha-D-glucosyl](n) + phosphate = [(1-&gt;4)-alpha-D-glucosyl](n-1) + alpha-D-glucose 1-phosphate. Its function is as follows. Phosphorylase is an important allosteric enzyme in carbohydrate metabolism. Enzymes from different sources differ in their regulatory mechanisms and in their natural substrates. However, all known phosphorylases share catalytic and structural properties. In Streptococcus pneumoniae serotype 4 (strain ATCC BAA-334 / TIGR4), this protein is Maltodextrin phosphorylase (malP).